The sequence spans 323 residues: Ankyrin repeat and SOCS box protein 11 (323 aa).

ANK repeat units lie at residues 64–93 (ADRS…NVNL), 97–126 (NRVS…HVNG), 130–159 (HGAT…KAQF), 162–191 (HLAS…NIDH), 195–224 (QLGT…SVDH), and 227–256 (WLDT…NLKR). One can recognise an SOCS box domain in the interval 274–323 (VEQALLLCEGPPALSQLCRLCVRKCLGRACHQAIHKLHLPEPLERFLLYQ).

It belongs to the ankyrin SOCS box (ASB) family. Substrate-recognition component of the ECS(ASB11) complex, composed of ASB11, CUL5, ELOB, ELOC and RNF7/RBX2.

The protein localises to the endoplasmic reticulum. The protein operates within protein modification; protein ubiquitination. Its function is as follows. Substrate-recognition component of a cullin-5-RING E3 ubiquitin-protein ligase complex (ECS complex, also named CRL5 complex), which mediates the ubiquitination and subsequent proteasomal degradation of target proteins, such as BIK, DIRAS2 and RPN1. The ECS(ASB11) complex acts as a regulator of the endoplasmic reticulum unfolded protein response by mediating ubiquitination and degradation of BIK. In Pongo abelii (Sumatran orangutan), this protein is Ankyrin repeat and SOCS box protein 11 (ASB11).